We begin with the raw amino-acid sequence, 310 residues long: Syndecan-1 (310 aa).

Positions 1 to 22 (MRRAALWLWLCALALSLQPALP) are cleaved as a signal peptide. Residues 23–254 (QIVATNLPPE…GLLDRKEVLG (232 aa)) are Extracellular-facing. 2 disordered regions span residues 27–100 (TNLP…EGPK) and 114–212 (LTAR…QDFT). Acidic residues predominate over residues 32–42 (EDQDGSGDDSD). Residue Ser-37 is glycosylated (O-linked (Xyl...) (chondroitin sulfate) serine). N-linked (GlcNAc...) asparagine glycosylation occurs at Asn-43. O-linked (Xyl...) (heparan sulfate) serine glycans are attached at residues Ser-45 and Ser-47. A compositionally biased stretch (polar residues) spans 55 to 75 (ITLSQQTPSTWKDTQLLTAIP). A compositionally biased stretch (basic and acidic residues) spans 117 to 127 (REQEATPRPRE). Over residues 128–151 (TTQLPTTHLASTTTATTAQEPATS) the composition is skewed to low complexity. Positions 153–164 (PHRDMQPGHHET) are enriched in basic and acidic residues. O-linked (Xyl...) (chondroitin sulfate) serine glycosylation is found at Ser-206 and Ser-216. A helical membrane pass occupies residues 255-275 (GVIAGGLVGLIFAVCLVGFML). Over 276–310 (YRMKKKDEGSYSLEEPKQANGGAYQKPTKQEEFYA) the chain is Cytoplasmic. The interval 284–310 (GSYSLEEPKQANGGAYQKPTKQEEFYA) is disordered. Ser-285 bears the Phosphoserine mark.

This sequence belongs to the syndecan proteoglycan family. In terms of assembly, interacts with CDCP1. Interacts (via C-terminus) with TIAM1 (via PDZ domain). Interacts with MDK. Post-translationally, shedding is enhanced by a number of factors such as heparanase, thrombin or EGF. Also by stress and wound healing. PMA-mediated shedding is inhibited by TIMP3. Detected in placenta (at protein level). Detected in fibroblasts (at protein level).

Its subcellular location is the membrane. It localises to the secreted. The protein resides in the extracellular exosome. Its function is as follows. Cell surface proteoglycan that contains both heparan sulfate and chondroitin sulfate and that links the cytoskeleton to the interstitial matrix. Regulates exosome biogenesis in concert with SDCBP and PDCD6IP. Able to induce its own expression in dental mesenchymal cells and also in the neighboring dental epithelial cells via an MSX1-mediated pathway. In Homo sapiens (Human), this protein is Syndecan-1.